We begin with the raw amino-acid sequence, 466 residues long: Coagulation factor VII (466 aa).

A signal peptide spans 1–20; it reads MVSQALRLLCLLLGLQGCLA. Positions 21–60 are excised as a propeptide; sequence AGGVAEASGGETRDMPWKPGPHRVFITQEEAHGVLHRRRR. The Gla domain occupies 61–105; the sequence is ANAFLEELRPGSLERECKEEQCSFEEAREIFKDLERTKLFWISYS. 10 positions are modified to 4-carboxyglutamate: glutamate 66, glutamate 67, glutamate 74, glutamate 76, glutamate 79, glutamate 80, glutamate 85, glutamate 86, glutamate 89, and glutamate 95. Cysteines 77 and 82 form a disulfide. The 37-residue stretch at 106–142 folds into the EGF-like 1; calcium-binding domain; the sequence is DGDQCASSPCQNGGSCKDQLQSYICFCLPAFEGRNCE. Intrachain disulfides connect cysteine 110–cysteine 121, cysteine 115–cysteine 130, cysteine 132–cysteine 141, cysteine 151–cysteine 162, cysteine 158–cysteine 172, cysteine 174–cysteine 187, cysteine 195–cysteine 322, cysteine 219–cysteine 224, cysteine 238–cysteine 254, and cysteine 370–cysteine 389. A glycan (O-linked (Glc...) serine; alternate) is linked at serine 112. O-linked (Xyl...) serine; alternate glycosylation occurs at serine 112. Serine 120 carries an O-linked (Fuc) serine glycan. At aspartate 123 the chain carries (3R)-3-hydroxyaspartate. An EGF-like 2 domain is found at 147 to 188; that stretch reads DQLICVNENGGCEQYCSDHTGTKRSCRCHEGYSLLADGVSCT. Asparagine 205 carries N-linked (GlcNAc...) asparagine glycosylation. One can recognise a Peptidase S1 domain in the interval 213–452; it reads IVGGKVCPKG…YIEWLQKLMR (240 aa). Catalysis depends on charge relay system residues histidine 253 and aspartate 302. The N-linked (GlcNAc...) asparagine glycan is linked to asparagine 382. Residue aspartate 398 participates in substrate binding. A disulfide bond links cysteine 400 and cysteine 428. Residue serine 404 is the Charge relay system of the active site.

This sequence belongs to the peptidase S1 family. Heterodimer of a light chain and a heavy chain linked by a disulfide bond. In terms of processing, the vitamin K-dependent, enzymatic carboxylation of some glutamate residues allows the modified protein to bind calcium. The iron and 2-oxoglutarate dependent 3-hydroxylation of aspartate and asparagine is (R) stereospecific within EGF domains. Post-translationally, O-glycosylated. O-fucosylated by POFUT1 on a conserved serine or threonine residue found in the consensus sequence C2-X(4,5)-[S/T]-C3 of EGF domains, where C2 and C3 are the second and third conserved cysteines. In terms of processing, can be either O-glucosylated or O-xylosylated at Ser-112 by POGLUT1.

The protein localises to the secreted. The enzyme catalyses Selective cleavage of Arg-|-Ile bond in factor X to form factor Xa.. Initiates the extrinsic pathway of blood coagulation. Serine protease that circulates in the blood in a zymogen form. Factor VII is converted to factor VIIa by factor Xa, factor XIIa, factor IXa, or thrombin by minor proteolysis. In the presence of tissue factor and calcium ions, factor VIIa then converts factor X to factor Xa by limited proteolysis. Factor VIIa also converts factor IX to factor IXa in the presence of tissue factor and calcium. This Pan paniscus (Pygmy chimpanzee) protein is Coagulation factor VII (F7).